The chain runs to 118 residues: UPF0102 protein ROP_66030 (118 aa).

The protein belongs to the UPF0102 family.

The sequence is that of UPF0102 protein ROP_66030 from Rhodococcus opacus (strain B4).